The sequence spans 512 residues: Glycerol kinase 1 (512 aa).

T18 contributes to the ADP binding site. The ATP site is built by T18, T19, and S20. A sn-glycerol 3-phosphate-binding site is contributed by T18. R22 contacts ADP. Positions 88, 89, 140, and 255 each coordinate sn-glycerol 3-phosphate. Positions 88, 89, 140, 255, and 256 each coordinate glycerol. Positions 277 and 321 each coordinate ADP. 4 residues coordinate ATP: T277, G321, Q325, and G422. Residues G422 and N426 each contribute to the ADP site.

It belongs to the FGGY kinase family.

It catalyses the reaction glycerol + ATP = sn-glycerol 3-phosphate + ADP + H(+). Its pathway is polyol metabolism; glycerol degradation via glycerol kinase pathway; sn-glycerol 3-phosphate from glycerol: step 1/1. Inhibited by fructose 1,6-bisphosphate (FBP). Its function is as follows. Key enzyme in the regulation of glycerol uptake and metabolism. Catalyzes the phosphorylation of glycerol to yield sn-glycerol 3-phosphate. This chain is Glycerol kinase 1, found in Streptomyces avermitilis (strain ATCC 31267 / DSM 46492 / JCM 5070 / NBRC 14893 / NCIMB 12804 / NRRL 8165 / MA-4680).